Here is a 213-residue protein sequence, read N- to C-terminus: Imidazoleglycerol-phosphate dehydratase (213 aa).

It belongs to the imidazoleglycerol-phosphate dehydratase family.

The protein localises to the cytoplasm. It catalyses the reaction D-erythro-1-(imidazol-4-yl)glycerol 3-phosphate = 3-(imidazol-4-yl)-2-oxopropyl phosphate + H2O. It participates in amino-acid biosynthesis; L-histidine biosynthesis; L-histidine from 5-phospho-alpha-D-ribose 1-diphosphate: step 6/9. The chain is Imidazoleglycerol-phosphate dehydratase from Trichodesmium erythraeum (strain IMS101).